Here is a 1080-residue protein sequence, read N- to C-terminus: Kinesin-like protein KIN-14E (1080 aa).

The disordered stretch occupies residues 1-35; it reads MDFSWTTGWEKAAADDDEAESAPAPAPPAPSPQEA. A coiled-coil region spans residues 247-355; it reads QTRTSKLISK…KQEQTLLSLE (109 aa). The Kinesin motor domain maps to 407–729; that stretch reads NIRVFCRCRP…LNFASRVRRI (323 aa). Residue 490-497 participates in ATP binding; the sequence is GQTGTGKT. Positions 736-893 form a coiled coil; sequence KQVDTAELQK…EHHRSVAESK (158 aa). The span at 960–970 shows a compositional bias: basic and acidic residues; the sequence is AMSEKEQHILR. The tract at residues 960–1080 is disordered; sequence AMSEKEQHIL…AVNKTRGWVR (121 aa). A compositionally biased stretch (polar residues) spans 971-985; the sequence is SSDSMNKKVTNNSSI. Over residues 1047–1059 the composition is skewed to low complexity; the sequence is TATSKTAAATHKT.

Belongs to the TRAFAC class myosin-kinesin ATPase superfamily. Kinesin family. KIN-14 subfamily.

The sequence is that of Kinesin-like protein KIN-14E from Oryza sativa subsp. japonica (Rice).